The chain runs to 183 residues: Acireductone dioxygenase (183 aa).

4 residues coordinate Fe(2+): histidine 95, histidine 97, glutamate 101, and histidine 139. Ni(2+)-binding residues include histidine 95, histidine 97, glutamate 101, and histidine 139.

This sequence belongs to the acireductone dioxygenase (ARD) family. As to quaternary structure, monomer. Requires Fe(2+) as cofactor. Ni(2+) serves as cofactor.

The enzyme catalyses 1,2-dihydroxy-5-(methylsulfanyl)pent-1-en-3-one + O2 = 3-(methylsulfanyl)propanoate + CO + formate + 2 H(+). It catalyses the reaction 1,2-dihydroxy-5-(methylsulfanyl)pent-1-en-3-one + O2 = 4-methylsulfanyl-2-oxobutanoate + formate + 2 H(+). The protein operates within amino-acid biosynthesis; L-methionine biosynthesis via salvage pathway; L-methionine from S-methyl-5-thio-alpha-D-ribose 1-phosphate: step 5/6. Functionally, catalyzes 2 different reactions between oxygen and the acireductone 1,2-dihydroxy-3-keto-5-methylthiopentene (DHK-MTPene) depending upon the metal bound in the active site. Fe-containing acireductone dioxygenase (Fe-ARD) produces formate and 2-keto-4-methylthiobutyrate (KMTB), the alpha-ketoacid precursor of methionine in the methionine recycle pathway. Ni-containing acireductone dioxygenase (Ni-ARD) produces methylthiopropionate, carbon monoxide and formate, and does not lie on the methionine recycle pathway. The protein is Acireductone dioxygenase of Hydrogenobaculum sp. (strain Y04AAS1).